We begin with the raw amino-acid sequence, 183 residues long: Inner membrane-spanning protein YciB (183 aa).

5 consecutive transmembrane segments (helical) span residues 22-44 (VQAA…RILF), 53-73 (IVGL…DLAF), 76-96 (WKVT…QYVF), 121-141 (LGWA…SQLF), and 153-173 (GFTG…YPYI).

It belongs to the YciB family.

The protein localises to the cell inner membrane. Its function is as follows. Plays a role in cell envelope biogenesis, maintenance of cell envelope integrity and membrane homeostasis. This Haemophilus ducreyi (strain 35000HP / ATCC 700724) protein is Inner membrane-spanning protein YciB.